The primary structure comprises 249 residues: 2,3-bisphosphoglycerate-dependent phosphoglycerate mutase (249 aa).

Residues 8-15, 21-22, Arg60, 87-90, Lys98, 114-115, and 183-184 contribute to the substrate site; these read RHGESIWN, TG, ERHY, RR, and GN. His9 serves as the catalytic Tele-phosphohistidine intermediate. Catalysis depends on Glu87, which acts as the Proton donor/acceptor.

The protein belongs to the phosphoglycerate mutase family. BPG-dependent PGAM subfamily.

The enzyme catalyses (2R)-2-phosphoglycerate = (2R)-3-phosphoglycerate. Its pathway is carbohydrate degradation; glycolysis; pyruvate from D-glyceraldehyde 3-phosphate: step 3/5. Its function is as follows. Catalyzes the interconversion of 2-phosphoglycerate and 3-phosphoglycerate. This is 2,3-bisphosphoglycerate-dependent phosphoglycerate mutase from Caldanaerobacter subterraneus subsp. tengcongensis (strain DSM 15242 / JCM 11007 / NBRC 100824 / MB4) (Thermoanaerobacter tengcongensis).